The primary structure comprises 505 residues: DNA repair protein RadA (505 aa).

The C4-type zinc finger occupies 10 to 27 (CSACGADHAQWFGRCPKC). 107 to 114 (GDPGIGKS) is a binding site for ATP. The short motif at 281 to 285 (KNRFG) is the RadA KNRFG motif element. A lon-protease-like region spans residues 380–505 (DAYLSVAGGL…KIEEDLGKKD (126 aa)). The segment at 485 to 505 (NTTDQGNGSEAKIEEDLGKKD) is disordered. The segment covering 495 to 505 (AKIEEDLGKKD) has biased composition (basic and acidic residues).

It belongs to the RecA family. RadA subfamily.

Its function is as follows. DNA-dependent ATPase involved in processing of recombination intermediates, plays a role in repairing DNA breaks. Stimulates the branch migration of RecA-mediated strand transfer reactions, allowing the 3' invading strand to extend heteroduplex DNA faster. Binds ssDNA in the presence of ADP but not other nucleotides, has ATPase activity that is stimulated by ssDNA and various branched DNA structures, but inhibited by SSB. Does not have RecA's homology-searching function. In Synechocystis sp. (strain ATCC 27184 / PCC 6803 / Kazusa), this protein is DNA repair protein RadA.